Reading from the N-terminus, the 237-residue chain is Ribosomal RNA small subunit methyltransferase G (237 aa).

S-adenosyl-L-methionine contacts are provided by residues Gly78, Phe83, 129–130 (AE), and Arg148.

Belongs to the methyltransferase superfamily. RNA methyltransferase RsmG family.

It localises to the cytoplasm. In terms of biological role, specifically methylates the N7 position of a guanine in 16S rRNA. This Streptococcus pyogenes serotype M49 (strain NZ131) protein is Ribosomal RNA small subunit methyltransferase G.